The following is a 339-amino-acid chain: MRVYYDRDADLNLIKGKKVAVIGYGSQGHAHALNLKDSGVKDVAIALRKGSASAKKAENAGFKVMEVAEAAKWADVMMMLTPDELQADIYREHLHDNMKQGAALLFAHGLNVHFNLIEPRADLDVLMVAPKGPGHTVRSEYQRGGGVPCLIAIHKDASGNAHDLGLSYASAIGGGRAGIIETTFREECETDLFGEQVVLCGGLVELIKAGFETLVEAGYAPEMAYFECLHEVKLIVDLIYEGGIANMNYSISNTAEYGEYVTGPRIVTPETKAEMKRVLADIQNGIFTRNWMLENKVNQTSFKATRAKLAQHPIEEVGAKLRDMMPWIKKGALVDKSKN.

A KARI N-terminal Rossmann domain is found at Met1 to Thr182. NADP(+) contacts are provided by residues Tyr24–Gln27, Arg48, Ser51, Ser53, and Asp83–Gln86. Residue His108 is part of the active site. Gly134 contributes to the NADP(+) binding site. The 146-residue stretch at Thr183 to Ile328 folds into the KARI C-terminal knotted domain. Residues Asp191, Glu195, Glu227, and Glu231 each contribute to the Mg(2+) site. Position 252 (Ser252) interacts with substrate.

This sequence belongs to the ketol-acid reductoisomerase family. Mg(2+) serves as cofactor.

It carries out the reaction (2R)-2,3-dihydroxy-3-methylbutanoate + NADP(+) = (2S)-2-acetolactate + NADPH + H(+). The catalysed reaction is (2R,3R)-2,3-dihydroxy-3-methylpentanoate + NADP(+) = (S)-2-ethyl-2-hydroxy-3-oxobutanoate + NADPH + H(+). The protein operates within amino-acid biosynthesis; L-isoleucine biosynthesis; L-isoleucine from 2-oxobutanoate: step 2/4. It participates in amino-acid biosynthesis; L-valine biosynthesis; L-valine from pyruvate: step 2/4. Functionally, involved in the biosynthesis of branched-chain amino acids (BCAA). Catalyzes an alkyl-migration followed by a ketol-acid reduction of (S)-2-acetolactate (S2AL) to yield (R)-2,3-dihydroxy-isovalerate. In the isomerase reaction, S2AL is rearranged via a Mg-dependent methyl migration to produce 3-hydroxy-3-methyl-2-ketobutyrate (HMKB). In the reductase reaction, this 2-ketoacid undergoes a metal-dependent reduction by NADPH to yield (R)-2,3-dihydroxy-isovalerate. The protein is Ketol-acid reductoisomerase (NADP(+)) of Rhodopseudomonas palustris (strain ATCC BAA-98 / CGA009).